Reading from the N-terminus, the 228-residue chain is Cell surface Cu-only superoxide dismutase 5 (228 aa).

The signal sequence occupies residues 1 to 15 (MKYLSIFLLATFALA). A glycan (N-linked (GlcNAc...) asparagine) is linked at Asn-53. 2 residues coordinate Cu cation: His-75 and His-77. Asn-86 carries N-linked (GlcNAc...) asparagine glycosylation. A disulfide bond links Cys-87 and Cys-162. His-93 serves as a coordination point for Cu cation. The N-linked (GlcNAc...) asparagine glycan is linked to Asn-98. His-153 lines the Cu cation pocket. N-linked (GlcNAc...) asparagine glycans are attached at residues Asn-156, Asn-164, Asn-176, Asn-181, and Asn-192. A compositionally biased stretch (low complexity) spans 176 to 201 (NTTMSNSSSSSSQSAVNTSSSMASTA). A disordered region spans residues 176 to 204 (NTTMSNSSSSSSQSAVNTSSSMASTAPQG). Residue Asn-205 is the site of GPI-anchor amidated asparagine attachment. Positions 206-228 (GAERAVVNGLLAAGVVGVIAALI) are cleaved as a propeptide — removed in mature form.

The protein belongs to the Cu-Zn superoxide dismutase family. As to quaternary structure, monomer. The cofactor is Cu cation. The GPI-anchor is attached to the protein in the endoplasmic reticulum and serves to target the protein to the cell surface. There, the glucosamine-inositol phospholipid moiety is cleaved off and the GPI-modified mannoprotein is covalently attached via its lipidless GPI glycan remnant to the 1,6-beta-glucan of the outer cell wall layer.

It localises to the secreted. The protein localises to the cell wall. It is found in the membrane. The catalysed reaction is 2 superoxide + 2 H(+) = H2O2 + O2. With respect to regulation, secreted in a disulfide-oxidized form and apo-pools of secreted SOD5 can readily capture extracellular copper for rapid induction of enzyme activity. Superoxide dismutases serve to convert damaging superoxide radicals, a key form of ROS, to less damaging hydrogen peroxide that can be converted into water by catalase action. Degrades host-derived reactive oxygen species to escape innate immune surveillance. Involved in the occurrence of miconazole-tolerant persisters in biofilms. Persisters are cells that survive high doses of an antimicrobial agent. The unusual attributes of SOD5-like fungal proteins, including the absence of zinc and an open active site that readily captures extracellular copper, make these SODs well suited to meet challenges in zinc and copper availability at the host-pathogen interface. The sequence is that of Cell surface Cu-only superoxide dismutase 5 (SOD5) from Candida albicans (strain SC5314 / ATCC MYA-2876) (Yeast).